The chain runs to 690 residues: Crooked neck-like protein 1 (690 aa).

HAT repeat units follow at residues 61-93 (DYKL…WEES), 95-127 (KEIQ…MEMK), 129-161 (RQVN…MEEM), 163-194 (GNVA…FELR), 196-227 (KEVE…FEEK), 229-264 (AYFA…FEEN), 266-300 (KEFE…FEKK), 310-342 (IIVS…LVES), 344-378 (AEAD…LWVN), 388-424 (KDPE…FEIR), 459-491 (REFD…LETI), 493-527 (GDIE…FEIE), 529-560 (EETE…FELS), 565-606 (GSVA…EFGT), 608-646 (SDKE…YIFP), and 648-673 (DAAN…EREA). A mediates interaction with HSP90 region spans residues 250 to 467 (MDEHLYVAFA…LREFDRCRKL (218 aa)). S342 carries the phosphoserine modification. Residues 618 to 626 (PEKVKKRRK) carry the Nuclear localization signal motif. Basic and acidic residues predominate over residues 667–679 (QQQEREAAEQDPD). Residues 667–690 (QQQEREAAEQDPDKDIDESESSSF) form a disordered region. A compositionally biased stretch (acidic residues) spans 680–690 (KDIDESESSSF). Phosphoserine is present on S689.

It belongs to the crooked-neck family. Identified in the spliceosome C complex. Present in a spliceosome complex assembled in vitro containing CRNKL1, HPRP8BP and SNRPB2. Component of the minor spliceosome, which splices U12-type introns. Interacts with PPIL2 (via the PPIase cyclophilin-type domain); they may form a trimeric complex with HSP90.

It is found in the nucleus. The protein resides in the nucleus speckle. Its function is as follows. Involved in pre-mRNA splicing process. As a component of the minor spliceosome, involved in the splicing of U12-type introns in pre-mRNAs. This chain is Crooked neck-like protein 1 (Crnkl1), found in Mus musculus (Mouse).